The chain runs to 117 residues: NADH-ubiquinone oxidoreductase chain 3 (117 aa).

Transmembrane regions (helical) follow at residues 5–25 (ALSS…AWVL), 57–77 (FFLL…LMPL), and 86–106 (VFTT…GLIH).

It belongs to the complex I subunit 3 family.

It is found in the mitochondrion membrane. It carries out the reaction a ubiquinone + NADH + 5 H(+)(in) = a ubiquinol + NAD(+) + 4 H(+)(out). Its function is as follows. Core subunit of the mitochondrial membrane respiratory chain NADH dehydrogenase (Complex I) that is believed to belong to the minimal assembly required for catalysis. Complex I functions in the transfer of electrons from NADH to the respiratory chain. The immediate electron acceptor for the enzyme is believed to be ubiquinone. This is NADH-ubiquinone oxidoreductase chain 3 (ND3) from Lumbricus terrestris (Common earthworm).